A 591-amino-acid chain; its full sequence is Phosphoglucan phosphatase LSF1, chloroplastic (591 aa).

A chloroplast-targeting transit peptide spans 1-61; the sequence is MAFLQQISGL…RRRRVVLRVV (61 aa). A Tyrosine-protein phosphatase domain is found at 291–453; that stretch reads RYSKITEQIY…VDDGKHDGTP (163 aa). The Phosphocysteine intermediate role is filled by C390. 390–396 is a substrate binding site; the sequence is CTTGFDR.

The protein localises to the plastid. It localises to the chloroplast. In terms of biological role, starch granule-associated phosphoglucan phosphatase involved in the control of starch accumulation. Participates in the regulation of the initial steps of starch degradation at the granule surface. May release a different set of phosphate groups from those removed by DSP4. This Arabidopsis thaliana (Mouse-ear cress) protein is Phosphoglucan phosphatase LSF1, chloroplastic (LSF1).